The following is a 128-amino-acid chain: Disintegrin gabonin-1 (128 aa).

Positions 1 to 20 (MIQVLLVIICLAVFPYQGSS) are cleaved as a signal peptide. The propeptide occupies 21–47 (IILESGNVNDYEIVYPKKVTVLPTGAM). The region spanning 47-112 (MNSAHPCCDP…DCPRNPNKGE (66 aa)) is the Disintegrin domain. Disulfide bonds link C53/C76, C67/C73, C72/C97, and C85/C104. The Cell attachment site motif lies at 89-91 (RGD). The segment at 108-128 (PNKGESDELEWSAAATGSVLM) is disordered.

This sequence belongs to the disintegrin family. Dimeric disintegrin subfamily. In terms of assembly, heterodimer with bitisgabonin (bitisgabonin-1 is the name of the heterodimer); disulfide-linked. Expressed by the venom gland.

It localises to the secreted. The heterodimer bitisgabonin-1 is a potent inhibitor of the adhesion of the RGD-dependent integrin alpha-5/beta-1 (ITGA5/ITGB1) to immobilized fibronectin. The protein is Disintegrin gabonin-1 of Bitis gabonica (Gaboon adder).